Here is a 330-residue protein sequence, read N- to C-terminus: GRB2-related adapter protein 2 (330 aa).

One can recognise an SH3 1 domain in the interval 1–56 (MEAVAKFDFTASGEDELSFHTGDVLKILSNQEEWFKAELGSQEGYVPKNFIDIQFP). Tyr45 is modified (phosphotyrosine). The SH2 domain maps to 58 to 149 (WFHEGLSRHQ…QKQIFLRDRT (92 aa)). At Lys106 the chain carries N6-acetyllysine. A disordered region spans residues 143–244 (IFLRDRTRED…GSLDINDGHC (102 aa)). The segment covering 144–164 (FLRDRTREDQGHRGNSLDRRS) has biased composition (basic and acidic residues). Ser187 bears the Phosphoserine mark. Residues 209 to 222 (PAPQQLQQPPQQRY) show a composition bias toward low complexity. Ser236 carries the post-translational modification Phosphoserine. Thr262 is subject to Phosphothreonine. Residues 271–330 (GRVRWARALYDFEALEDDELGFHSGEVVEVLDSSNPSWWTGRLHNKLGLFPANYVAPMTR) form the SH3 2 domain.

This sequence belongs to the GRB2/sem-5/DRK family. Interacts with phosphorylated LIME1 upon TCR activation. Interacts with phosphorylated LAT and LAX1 upon TCR activation. Interacts with SHB. Interacts with PTPN23.

Its subcellular location is the nucleus. It localises to the cytoplasm. It is found in the endosome. In terms of biological role, interacts with SLP-76 to regulate NF-AT activation. Binds to tyrosine-phosphorylated shc. This is GRB2-related adapter protein 2 (GRAP2) from Homo sapiens (Human).